The following is a 124-amino-acid chain: Orexigenic neuropeptide QRFP (124 aa).

Residues 1–17 (MRCLCSWLCLLLPLSAC) form the signal peptide. A propeptide spanning residues 18 to 79 (FPLLDRRGPT…REHTGFRLGR (62 aa)) is cleaved from the precursor. Residues 63 to 100 (KEQQASRREHTGFRLGRQDSGSEATGFLPTDSEKASGP) form a disordered region. At Gln80 the chain carries Pyrrolidone carboxylic acid. Residue Phe122 is modified to Phenylalanine amide.

The protein belongs to the RFamide neuropeptide family. As to quaternary structure, ligand for the G-protein coupled receptor QRFPR/GPR103. In terms of tissue distribution, expressed in the brain with highest expression levels in the hypothalamus and optic nerve. Also expressed in the trachea and mammary gland.

It localises to the secreted. Its function is as follows. Stimulates feeding and grooming behavior, metabolic rate and locomotor activity and increases blood pressure. May have orexigenic activity. May promote aldosterone secretion by the adrenal gland. The polypeptide is Orexigenic neuropeptide QRFP (Qrfp) (Rattus norvegicus (Rat)).